Consider the following 209-residue polypeptide: Large ribosomal subunit protein uL3 (209 aa).

This sequence belongs to the universal ribosomal protein uL3 family. As to quaternary structure, part of the 50S ribosomal subunit. Forms a cluster with proteins L14 and L19.

Its function is as follows. One of the primary rRNA binding proteins, it binds directly near the 3'-end of the 23S rRNA, where it nucleates assembly of the 50S subunit. The protein is Large ribosomal subunit protein uL3 of Nitratidesulfovibrio vulgaris (strain DSM 19637 / Miyazaki F) (Desulfovibrio vulgaris).